A 327-amino-acid chain; its full sequence is Phenylalanine--tRNA ligase alpha subunit (327 aa).

Glu252 is a binding site for Mg(2+).

The protein belongs to the class-II aminoacyl-tRNA synthetase family. Phe-tRNA synthetase alpha subunit type 1 subfamily. Tetramer of two alpha and two beta subunits. Mg(2+) serves as cofactor.

The protein localises to the cytoplasm. The enzyme catalyses tRNA(Phe) + L-phenylalanine + ATP = L-phenylalanyl-tRNA(Phe) + AMP + diphosphate + H(+). This chain is Phenylalanine--tRNA ligase alpha subunit, found in Yersinia pestis bv. Antiqua (strain Antiqua).